Reading from the N-terminus, the 240-residue chain is Transcriptional activator protein VanR (240 aa).

One can recognise an HTH luxR-type domain in the interval 169–234 (DAKPRAVLTA…QAITKAILGG (66 aa)). The segment at residues 193–212 (AWEIATIINTSERTVKFHFS) is a DNA-binding region (H-T-H motif).

It belongs to the autoinducer-regulated transcriptional regulatory protein family.

In terms of biological role, probable transcriptional activator. Binds to autoinducer molecule ODHL. This chain is Transcriptional activator protein VanR (vanR), found in Vibrio anguillarum (Listonella anguillarum).